The following is a 125-amino-acid chain: Apolipoprotein C-IV (125 aa).

The first 27 residues, 1 to 27 (MSLLRHSLQALPALCLCVLVLACIGAC), serve as a signal peptide directing secretion.

It belongs to the apolipoprotein C4 family.

It is found in the secreted. Functionally, may participate in lipoprotein metabolism. This is Apolipoprotein C-IV (APOC4) from Ateles geoffroyi (Black-handed spider monkey).